The sequence spans 178 residues: Protein FAM89A (178 aa).

This sequence belongs to the FAM89 family.

The polypeptide is Protein FAM89A (FAM89A) (Bos taurus (Bovine)).